A 93-amino-acid chain; its full sequence is Small ribosomal subunit protein uS19 (93 aa).

Disordered regions lie at residues 1 to 24 and 73 to 93; these read MPRS…AQNE and EFAP…GRRR. 2 stretches are compositionally biased toward basic and acidic residues: residues 9–21 and 81–93; these read PFVD…KVDA and KGHE…GRRR.

The protein belongs to the universal ribosomal protein uS19 family.

Protein S19 forms a complex with S13 that binds strongly to the 16S ribosomal RNA. This Kineococcus radiotolerans (strain ATCC BAA-149 / DSM 14245 / SRS30216) protein is Small ribosomal subunit protein uS19.